Consider the following 1010-residue polypeptide: Plasma membrane ATPase 2 (1010 aa).

Positions 1–14 are enriched in basic and acidic residues; the sequence is MQRNNGEGRPEGMH. Disordered regions lie at residues 1-126 and 139-165; these read MQRN…EDED and QDQEEEQVEEEESPGPAGAAKVVPEEL. At 1-201 the chain is on the cytoplasmic side; it reads MQRNNGEGRP…KEEKTNNIKK (201 aa). A compositionally biased stretch (polar residues) spans 25-34; sequence FKNNASPQDD. The segment covering 42–52 has biased composition (acidic residues); that stretch reads YEEGGVEDSAV. A compositionally biased stretch (polar residues) spans 68 to 106; sequence APNTHAQQANLQSGNTSITHETQSTSRGQEATTSPSLSA. A compositionally biased stretch (acidic residues) spans 140–151; it reads DQEEEQVEEEES. The chain crosses the membrane as a helical span at residues 202 to 222; the sequence is FLSFFVGPIQFVMELAAALAA. The Extracellular segment spans residues 223–226; the sequence is GLRD. A helical membrane pass occupies residues 227–246; that stretch reads WVDFGVICALLLLNATVGFV. Residues 247–377 lie on the Cytoplasmic side of the membrane; it reads QEYQAGSIVD…SQGHFTEVLN (131 aa). Residues 378 to 399 traverse the membrane as a helical segment; the sequence is GIGTILLVLVILTLLCIYTAAF. Topologically, residues 400–410 are extracellular; sequence YRSVRLAALLE. Residues 411–433 form a helical membrane-spanning segment; sequence YTLAITIIGVPVGLPAVVTTTMA. Residues 434–805 lie on the Cytoplasmic side of the membrane; sequence VGAAYLAKKK…LIIRNQLLNL (372 aa). Asp-464 acts as the 4-aspartylphosphate intermediate in catalysis. Asp-720 and Asp-724 together coordinate Mg(2+). A helical transmembrane segment spans residues 806-824; it reads ELIVFIAIFADVATLAIAY. Residues 825 to 840 are Extracellular-facing; the sequence is DNAPYAMKPVKWNLPR. Residues 841–860 traverse the membrane as a helical segment; that stretch reads LWGLATIVGILLAIGTWIVN. Topologically, residues 861–912 are cytoplasmic; it reads TTMIAQGQNRGIVQNFGVQDEVLFLQISLTENWLIFITRCSGPFWSSFPSWQ. Residues 913–933 form a helical membrane-spanning segment; that stretch reads LSGAVLVVDILATLFCIFGWF. Over 934–946 the chain is Extracellular; it reads KGGHQTSIVAVIR. The helical transmembrane segment at 947–963 threads the bilayer; the sequence is IWMYSFGIFCLIAGVYY. At 964 to 1010 the chain is on the cytoplasmic side; that stretch reads ILSESSSFDRWMHGKHKERGTTRKLEDFVMQLQRTSTHHEAEGKVTS.

It belongs to the cation transport ATPase (P-type) (TC 3.A.3) family. Type IIIA subfamily. In addition to transient phosphorylation of the active site Asp residue, this protein, but not the product of the pma1 locus, is phosphorylated efficiently in isolated plasma membrane.

It is found in the cell membrane. The enzyme catalyses ATP + H2O + H(+)(in) = ADP + phosphate + 2 H(+)(out). In terms of biological role, the plasma membrane ATPase of plants and fungi is a hydrogen ion pump. The proton gradient it generates drives the active transport of nutrients by H(+)-symport. The resulting external acidification and/or internal alkinization may mediate growth responses. The chain is Plasma membrane ATPase 2 (pma2) from Schizosaccharomyces pombe (strain 972 / ATCC 24843) (Fission yeast).